Reading from the N-terminus, the 143-residue chain is Transcriptional regulator MraZ (143 aa).

SpoVT-AbrB domains follow at residues 5-47 and 76-119; these read TYTP…SARE and ASDE…DSES.

The protein belongs to the MraZ family. In terms of assembly, forms oligomers.

The protein resides in the cytoplasm. It is found in the nucleoid. The protein is Transcriptional regulator MraZ of Micrococcus luteus (strain ATCC 4698 / DSM 20030 / JCM 1464 / CCM 169 / CCUG 5858 / IAM 1056 / NBRC 3333 / NCIMB 9278 / NCTC 2665 / VKM Ac-2230) (Micrococcus lysodeikticus).